We begin with the raw amino-acid sequence, 412 residues long: Transforming growth factor beta-2 proprotein (412 aa).

The N-terminal stretch at 1–20 (MHCYLLSVFLTLDLAAVALS) is a signal peptide. Asn72, Asn139, and Asn240 each carry an N-linked (GlcNAc...) asparagine glycan. 4 disulfide bridges follow: Cys307–Cys316, Cys315–Cys378, Cys344–Cys409, and Cys348–Cys411.

The protein belongs to the TGF-beta family. As to quaternary structure, interacts with Transforming growth factor beta-2 (TGF-beta-2) chain; interaction is non-covalent and maintains (TGF-beta-2) in a latent state. In terms of assembly, homodimer; disulfide-linked. Interacts with TGF-beta receptors (TGFBR1 and TGFBR2), leading to signal transduction. The precursor proprotein is cleaved in the Golgi apparatus to form Transforming growth factor beta-2 (TGF-beta-2) and Latency-associated peptide (LAP) chains, which remain non-covalently linked, rendering TGF-beta-2 inactive.

The protein localises to the secreted. It is found in the extracellular space. Its subcellular location is the extracellular matrix. In terms of biological role, precursor of the Latency-associated peptide (LAP) and Transforming growth factor beta-2 (TGF-beta-2) chains, which constitute the regulatory and active subunit of TGF-beta-2, respectively. Its function is as follows. Required to maintain the Transforming growth factor beta-2 (TGF-beta-2) chain in a latent state during storage in extracellular matrix. Associates non-covalently with TGF-beta-2 and regulates its activation via interaction with 'milieu molecules', such as LTBP1 and LRRC32/GARP, that control activation of TGF-beta-2. Functionally, multifunctional protein that regulates various processes such as angiogenesis and heart development. Activation into mature form follows different steps: following cleavage of the proprotein in the Golgi apparatus, Latency-associated peptide (LAP) and Transforming growth factor beta-2 (TGF-beta-2) chains remain non-covalently linked rendering TGF-beta-2 inactive during storage in extracellular matrix. At the same time, LAP chain interacts with 'milieu molecules', such as LTBP1 and LRRC32/GARP, that control activation of TGF-beta-2 and maintain it in a latent state during storage in extracellular milieus. Once activated following release of LAP, TGF-beta-2 acts by binding to TGF-beta receptors (TGFBR1 and TGFBR2), which transduce signal. In Gallus gallus (Chicken), this protein is Transforming growth factor beta-2 proprotein (TGFB2).